The following is a 640-amino-acid chain: 2-hydroxyacyl-CoA lyase 2 (640 aa).

A helical membrane pass occupies residues Val2–Val22. Glu102 is a thiamine diphosphate binding site. Residues Asp477–Cys557 are thiamine pyrophosphate binding. Mg(2+) contacts are provided by Asp528 and Asn554.

It belongs to the TPP enzyme family. It depends on Mg(2+) as a cofactor. The cofactor is thiamine diphosphate.

It localises to the endoplasmic reticulum membrane. It carries out the reaction 2-hydroxyoctadecanoyl-CoA = heptadecanal + formyl-CoA. It catalyses the reaction (2R)-hydroxyhexadecanoyl-CoA = pentadecanal + formyl-CoA. Endoplasmic reticulum 2-OH acyl-CoA lyase involved in the cleavage (C1 removal) reaction in the fatty acid alpha-oxydation in a thiamine pyrophosphate (TPP)-dependent manner. The chain is 2-hydroxyacyl-CoA lyase 2 from Caenorhabditis elegans.